Reading from the N-terminus, the 328-residue chain is Cell division protein ZipA (328 aa).

At 1–6 the chain is on the periplasmic side; sequence MMQDLR. The helical transmembrane segment at 7 to 27 threads the bilayer; sequence LILIVVGAIAIIALLLHGLWT. The Cytoplasmic portion of the chain corresponds to 28-328; that stretch reads SRKERSSLFR…REVLDANTIA (301 aa). Over residues 61 to 72 the composition is skewed to basic and acidic residues; the sequence is GEVRVRTSHPQE. A disordered region spans residues 61 to 183; the sequence is GEVRVRTSHP…EPVAPAPEAK (123 aa). 2 stretches are compositionally biased toward polar residues: residues 95–104 and 164–174; these read KSAQVKTASR and APQQHVESQQE.

It belongs to the ZipA family. As to quaternary structure, interacts with FtsZ via their C-terminal domains.

Its subcellular location is the cell inner membrane. Functionally, essential cell division protein that stabilizes the FtsZ protofilaments by cross-linking them and that serves as a cytoplasmic membrane anchor for the Z ring. Also required for the recruitment to the septal ring of downstream cell division proteins. This chain is Cell division protein ZipA, found in Yersinia pestis bv. Antiqua (strain Antiqua).